The following is a 197-amino-acid chain: 7-methyl-GTP pyrophosphatase (197 aa).

Asp-72 acts as the Proton acceptor in catalysis.

Belongs to the Maf family. YceF subfamily. A divalent metal cation is required as a cofactor.

It localises to the cytoplasm. The enzyme catalyses N(7)-methyl-GTP + H2O = N(7)-methyl-GMP + diphosphate + H(+). Functionally, nucleoside triphosphate pyrophosphatase that hydrolyzes 7-methyl-GTP (m(7)GTP). May have a dual role in cell division arrest and in preventing the incorporation of modified nucleotides into cellular nucleic acids. In Bordetella avium (strain 197N), this protein is 7-methyl-GTP pyrophosphatase.